The sequence spans 380 residues: Cytochrome b (380 aa).

A run of 4 helical transmembrane segments spans residues phenylalanine 34 to methionine 54, tryptophan 78 to isoleucine 99, tryptophan 114 to leucine 134, and phenylalanine 179 to threonine 199. Heme b-binding residues include histidine 84 and histidine 98. Histidine 183 and histidine 197 together coordinate heme b. Histidine 202 lines the a ubiquinone pocket. 4 helical membrane-spanning segments follow: residues leucine 227–serine 247, leucine 289–histidine 309, leucine 321–serine 341, and phenylalanine 348–proline 368.

This sequence belongs to the cytochrome b family. The cytochrome bc1 complex contains 11 subunits: 3 respiratory subunits (MT-CYB, CYC1 and UQCRFS1), 2 core proteins (UQCRC1 and UQCRC2) and 6 low-molecular weight proteins (UQCRH/QCR6, UQCRB/QCR7, UQCRQ/QCR8, UQCR10/QCR9, UQCR11/QCR10 and a cleavage product of UQCRFS1). This cytochrome bc1 complex then forms a dimer. Heme b serves as cofactor.

It localises to the mitochondrion inner membrane. In terms of biological role, component of the ubiquinol-cytochrome c reductase complex (complex III or cytochrome b-c1 complex) that is part of the mitochondrial respiratory chain. The b-c1 complex mediates electron transfer from ubiquinol to cytochrome c. Contributes to the generation of a proton gradient across the mitochondrial membrane that is then used for ATP synthesis. The polypeptide is Cytochrome b (MT-CYB) (Pterodroma hypoleuca (Bonin petrel)).